Reading from the N-terminus, the 82-residue chain is U-actitoxin-Oulsp2 (82 aa).

The N-terminal stretch at 1 to 21 is a signal peptide; that stretch reads MNTKLVVVFLLSAILFVSVTA. Positions 22–46 are excised as a propeptide; sequence SRPGKDLERDEAYETYDDERPYFKR. Positions 48–82 constitute a ShKT domain; sequence CKDNLPAATCSNVKANNNCSSEKYKTNCAKTCGEC. 3 cysteine pairs are disulfide-bonded: cysteine 48/cysteine 82, cysteine 57/cysteine 75, and cysteine 66/cysteine 79. Residues 70–71 are theoritically crucial for binding to potassium channels; that stretch reads KY.

Belongs to the sea anemone type 1 potassium channel toxin family. Type 1b subfamily.

The protein localises to the secreted. It localises to the nematocyst. In terms of biological role, probable toxin with unknown function. In contrast to similar toxins, this toxin does not inhibit voltage-gated potassium channels (tested at 100 nM). Does not show antimicrobial activities against bacteria and yeasts. In Oulactis sp. (Sea anemone), this protein is U-actitoxin-Oulsp2.